The chain runs to 333 residues: Procathepsin L (333 aa).

The signal sequence occupies residues 1-17 (MNPTLILAAFCLGIASA). A propeptide spans 18-113 (TLTFDHSLEA…KVFQEPLFYE (96 aa)) (activation peptide). Glutamate 122 contacts Zn(2+). Disulfide bonds link cysteine 135-cysteine 178 and cysteine 169-cysteine 211. Residue cysteine 138 is part of the active site. Zn(2+) is bound by residues glutamate 163, aspartate 184, glutamate 199, glutamate 205, and glutamate 209. N-linked (GlcNAc...) asparagine glycosylation is present at asparagine 221. The Zn(2+) site is built by aspartate 227, aspartate 250, histidine 253, aspartate 273, and aspartate 275. A disulfide bond links cysteine 269 and cysteine 322. The active site involves histidine 276. Residues 289–291 (ESD) constitute a propeptide that is removed on maturation. Asparagine 300 is a catalytic residue.

This sequence belongs to the peptidase C1 family. Dimer of a heavy and a light chain linked by disulfide bonds. Interacts with Long isoform of CD74/Ii chain; the interaction stabilizes the conformation of mature CTSL. During export along the endocytic pathway, pro-CTSL undergoes several proteolytic cleavages to generate the CTSL single-chain and two-chain mature forms, composed of a heavy chain linked to a light chain by disulfide bonds. Autocleavage; produces the single-chain CTSL after cleavage of the propeptide. The cleavage can be intermolecular.

The protein resides in the lysosome. Its subcellular location is the apical cell membrane. The protein localises to the cytoplasmic vesicle. It localises to the secretory vesicle. It is found in the chromaffin granule. The protein resides in the secreted. Its subcellular location is the extracellular space. The protein localises to the nucleus. The enzyme catalyses Specificity close to that of papain. As compared to cathepsin B, cathepsin L exhibits higher activity toward protein substrates, but has little activity on Z-Arg-Arg-NHMec, and no peptidyl-dipeptidase activity.. Its activity is regulated as follows. Inhibited by the propeptide produced by autocleavage. Long isoform of CD74/Ii chain stabilizes the conformation of mature CTSL by binding to its active site and serving as a chaperone to help maintain a pool of mature enzyme in endocytic compartments and extracellular space of APCs. IFNG enhances the conversion into the CTSL mature and active form. Inhibited by CST6. Inhibited by the glycopeptide antibiotic teicoplanin. Inhibited by amantadine. In terms of biological role, thiol protease important for the overall degradation of proteins in lysosomes. Plays a critical for normal cellular functions such as general protein turnover, antigen processing and bone remodeling. Involved in the solubilization of cross-linked TG/thyroglobulin and in the subsequent release of thyroid hormone thyroxine (T4) by limited proteolysis of TG/thyroglobulin in the thyroid follicle lumen. In neuroendocrine chromaffin cells secretory vesicles, catalyzes the prohormone proenkephalin processing to the active enkephalin peptide neurotransmitter. In thymus, regulates CD4(+) T cell positive selection by generating the major histocompatibility complex class II (MHCII) bound peptide ligands presented by cortical thymic epithelial cells. Also mediates invariant chain processing in cortical thymic epithelial cells. Major elastin-degrading enzyme at neutral pH. Accumulates as a mature and active enzyme in the extracellular space of antigen presenting cells (APCs) to regulate degradation of the extracellular matrix in the course of inflammation. Secreted form generates endostatin from COL18A1. Critical for cardiac morphology and function. Plays an important role in hair follicle morphogenesis and cycling, as well as epidermal differentiation. Required for maximal stimulation of steroidogenesis by TIMP1. Its function is as follows. (Microbial infection) In cells lacking TMPRSS2 expression, facilitates human coronaviruses SARS-CoV and SARS-CoV-2 infections via a slow acid-activated route with the proteolysis of coronavirus spike (S) glycoproteins in lysosome for entry into host cell. Proteolysis within lysosomes is sufficient to activate membrane fusion by coronaviruses SARS-CoV and EMC (HCoV-EMC) S as well as Zaire ebolavirus glycoproteins. Functions in the regulation of cell cycle progression through proteolytic processing of the CUX1 transcription factor. Translation initiation at downstream start sites allows the synthesis of isoforms that are devoid of a signal peptide and localize to the nucleus where they cleave the CUX1 transcription factor and modify its DNA binding properties. The protein is Procathepsin L of Homo sapiens (Human).